Reading from the N-terminus, the 150-residue chain is Large ribosomal subunit protein bL9 (150 aa).

Belongs to the bacterial ribosomal protein bL9 family.

Functionally, binds to the 23S rRNA. The chain is Large ribosomal subunit protein bL9 from Corynebacterium glutamicum (strain R).